A 330-amino-acid polypeptide reads, in one-letter code: Aspartate--ammonia ligase (330 aa).

Belongs to the class-II aminoacyl-tRNA synthetase family. AsnA subfamily.

The protein resides in the cytoplasm. It carries out the reaction L-aspartate + NH4(+) + ATP = L-asparagine + AMP + diphosphate + H(+). The protein operates within amino-acid biosynthesis; L-asparagine biosynthesis; L-asparagine from L-aspartate (ammonia route): step 1/1. The chain is Aspartate--ammonia ligase from Escherichia coli O7:K1 (strain IAI39 / ExPEC).